We begin with the raw amino-acid sequence, 607 residues long: MTEQFDPSAFLSTCSGRPGVYRMFDSDARLLYVGKAKNLKNRLSSYFRKTGQAPKTAALVARIAQIETTITANETEALLLEQTLIKEWRPPYNILLRDDKSYPYVFLSDGDFPRFSIHRGAKKQKGKYFGPYPSAGAIRESLSLLQKTFMVRQCEDSYYKNRTRPCLQYQIKRCKAPCVGLVEPEVYAEDVRHSVMFLEGRSNALTDELSTAMEAAASTLDFEKAAELRDQISLLRRVQDQQSMEGGTGDVDVVAAFVNPGGACVHLISVRGGRVLGSKNFFPQVGIEEDVAEVMSAFLGQYFVSSPERDLPSELIVNVVHEDFPTLIAAIDELRGRELTISHRVRGTRARWQQLAVTNAEQALSARLANRQHVAARFEALAEVLNLDEPPQRLECYDISHSSGEATVASCVVFGPEGPLKSDYRRYNIEGVTAGDDYAAMHQALTRRFSKLKDGEGKLPDILLVDGGKGQLSMARDVLNELAVPDLILLGVAKGATRKAGFETLYLNDAAHEFTLKGDSPALHLIQQIRDEAHRFAITGHRARRGKTRRTSTLEGVAGVGPKRRRDLLKHFGGLQELSRASIDEIAKAPGISKKLAELIYANLHSE.

The GIY-YIG domain maps to 16–94 (GRPGVYRMFD…IKEWRPPYNI (79 aa)). The UVR domain maps to 203–238 (NALTDELSTAMEAAASTLDFEKAAELRDQISLLRRV).

It belongs to the UvrC family. In terms of assembly, interacts with UvrB in an incision complex.

The protein resides in the cytoplasm. Functionally, the UvrABC repair system catalyzes the recognition and processing of DNA lesions. UvrC both incises the 5' and 3' sides of the lesion. The N-terminal half is responsible for the 3' incision and the C-terminal half is responsible for the 5' incision. This is UvrABC system protein C from Pseudomonas fluorescens (strain ATCC BAA-477 / NRRL B-23932 / Pf-5).